Here is a 366-residue protein sequence, read N- to C-terminus: S-adenosylmethionine:tRNA ribosyltransferase-isomerase (366 aa).

Belongs to the QueA family. Monomer.

Its subcellular location is the cytoplasm. The enzyme catalyses 7-aminomethyl-7-carbaguanosine(34) in tRNA + S-adenosyl-L-methionine = epoxyqueuosine(34) in tRNA + adenine + L-methionine + 2 H(+). Its pathway is tRNA modification; tRNA-queuosine biosynthesis. Functionally, transfers and isomerizes the ribose moiety from AdoMet to the 7-aminomethyl group of 7-deazaguanine (preQ1-tRNA) to give epoxyqueuosine (oQ-tRNA). In Caulobacter vibrioides (strain ATCC 19089 / CIP 103742 / CB 15) (Caulobacter crescentus), this protein is S-adenosylmethionine:tRNA ribosyltransferase-isomerase.